Consider the following 179-residue polypeptide: Transcription termination/antitermination protein NusG (179 aa).

A KOW domain is found at 130-157; it reads EGDVVQIIDGAFMGQEGRVVEIENNKVK.

The protein belongs to the NusG family.

In terms of biological role, participates in transcription elongation, termination and antitermination. The sequence is that of Transcription termination/antitermination protein NusG from Streptococcus pyogenes serotype M1.